The following is a 417-amino-acid chain: Odorant receptor 65a (417 aa).

The Cytoplasmic portion of the chain corresponds to Met-1–Arg-62. The chain crosses the membrane as a helical span at residues Ile-63–Tyr-83. Over Gly-84 to Asp-98 the chain is Extracellular. The helical transmembrane segment at Leu-99–Ala-119 threads the bilayer. Over Gly-120–His-152 the chain is Cytoplasmic. A helical transmembrane segment spans residues Phe-153–Ile-173. Residues Lys-174 to Tyr-206 are Extracellular-facing. Residues Ile-207–Val-227 traverse the membrane as a helical segment. Topologically, residues Glu-228–Gly-290 are cytoplasmic. The chain crosses the membrane as a helical span at residues Ala-291–Leu-311. Residues Ala-312 to Asn-316 are Extracellular-facing. The chain crosses the membrane as a helical span at residues Pro-317–Trp-337. The Cytoplasmic segment spans residues Ser-338–Phe-393. A helical membrane pass occupies residues Asn-394–Asn-414. The Extracellular segment spans residues Thr-415–Glu-417.

Belongs to the insect chemoreceptor superfamily. Heteromeric odorant receptor channel (TC 1.A.69) family. Or49a subfamily. In terms of assembly, interacts with Orco. Complexes exist early in the endomembrane system in olfactory sensory neurons (OSNs), coupling these complexes to the conserved ciliary trafficking pathway. Expressed in olfactory sensory neurons in the antenna.

The protein localises to the cell membrane. Functionally, odorant receptor which mediates acceptance or avoidance behavior, depending on its substrates. The odorant receptor repertoire encodes a large collection of odor stimuli that vary widely in identity, intensity, and duration. May form a complex with Orco to form odorant-sensing units, providing sensitive and prolonged odorant signaling and calcium permeability. Involved in olfactory communication for modulating aggression through the sensing of the male-specific pheromone 11-cis-vaccenyl acetate (cVA). Although acute exposure to cVA elicites aggression through Or67d olfactory receptor neurons (ORNs), chronic cVA exposure reduces aggression through Or65a ORNs. Moreover, cVA leads to generalized learning with mated females. It is a major component of the male cuticular hydrocarbon profile, but it is not found on virgin females. During copulation, cVA is transferred to the female in ejaculate along with sperm and peptides that decrease her sexual receptivity. This is Odorant receptor 65a (Or65a) from Drosophila melanogaster (Fruit fly).